Consider the following 193-residue polypeptide: Xanthine phosphoribosyltransferase (193 aa).

Residues Leu20 and Asn27 each contribute to the xanthine site. A 5-phospho-alpha-D-ribose 1-diphosphate-binding site is contributed by 128–132 (ANGDA). Lys156 provides a ligand contact to xanthine.

This sequence belongs to the purine/pyrimidine phosphoribosyltransferase family. Xpt subfamily. As to quaternary structure, homodimer.

The protein resides in the cytoplasm. The catalysed reaction is XMP + diphosphate = xanthine + 5-phospho-alpha-D-ribose 1-diphosphate. Its pathway is purine metabolism; XMP biosynthesis via salvage pathway; XMP from xanthine: step 1/1. Converts the preformed base xanthine, a product of nucleic acid breakdown, to xanthosine 5'-monophosphate (XMP), so it can be reused for RNA or DNA synthesis. This is Xanthine phosphoribosyltransferase from Staphylococcus saprophyticus subsp. saprophyticus (strain ATCC 15305 / DSM 20229 / NCIMB 8711 / NCTC 7292 / S-41).